We begin with the raw amino-acid sequence, 284 residues long: Diaminopimelate epimerase (284 aa).

Substrate is bound by residues N14 and N67. C76 (proton donor) is an active-site residue. Substrate contacts are provided by residues 77-78, N166, N199, and 217-218; these read GN and ER. C226 (proton acceptor) is an active-site residue. A substrate-binding site is contributed by 227–228; the sequence is GT.

Belongs to the diaminopimelate epimerase family. In terms of assembly, homodimer.

It is found in the cytoplasm. The catalysed reaction is (2S,6S)-2,6-diaminopimelate = meso-2,6-diaminopimelate. It functions in the pathway amino-acid biosynthesis; L-lysine biosynthesis via DAP pathway; DL-2,6-diaminopimelate from LL-2,6-diaminopimelate: step 1/1. Its function is as follows. Catalyzes the stereoinversion of LL-2,6-diaminopimelate (L,L-DAP) to meso-diaminopimelate (meso-DAP), a precursor of L-lysine and an essential component of the bacterial peptidoglycan. The chain is Diaminopimelate epimerase from Bacillus pumilus (strain SAFR-032).